Reading from the N-terminus, the 511-residue chain is Xylose import ATP-binding protein XylG (511 aa).

2 ABC transporter domains span residues 6–244 (LEMR…VGRE) and 261–506 (FEAR…IGKP). Residue 38 to 45 (GENGAGKS) participates in ATP binding.

This sequence belongs to the ABC transporter superfamily. Xylose importer (TC 3.A.1.2.4) family. The complex is composed of two ATP-binding proteins (XylG), two transmembrane proteins (XylH) and a solute-binding protein (XylF).

The protein localises to the cell inner membrane. The enzyme catalyses D-xylose(out) + ATP + H2O = D-xylose(in) + ADP + phosphate + H(+). Part of the ABC transporter complex XylFGH involved in xylose import. Responsible for energy coupling to the transport system. The sequence is that of Xylose import ATP-binding protein XylG from Brucella suis biovar 1 (strain 1330).